We begin with the raw amino-acid sequence, 469 residues long: Cysteine--tRNA ligase (469 aa).

Position 33 (C33) interacts with Zn(2+). The short motif at 35 to 45 is the 'HIGH' region element; that stretch reads PTVYNLLHIGN. Positions 214, 239, and 243 each coordinate Zn(2+). The 'KMSKS' region motif lies at 271-275; it reads KMSKS. An ATP-binding site is contributed by K274.

The protein belongs to the class-I aminoacyl-tRNA synthetase family. As to quaternary structure, monomer. Zn(2+) serves as cofactor.

It localises to the cytoplasm. The enzyme catalyses tRNA(Cys) + L-cysteine + ATP = L-cysteinyl-tRNA(Cys) + AMP + diphosphate. The protein is Cysteine--tRNA ligase of Petrotoga mobilis (strain DSM 10674 / SJ95).